The chain runs to 359 residues: Peptide chain release factor 1 (359 aa).

An N5-methylglutamine modification is found at Gln236. Residues 288-307 are disordered; that stretch reads QDEQDAERKSTIGTGDRSER. Over residues 293-307 the composition is skewed to basic and acidic residues; it reads AERKSTIGTGDRSER.

This sequence belongs to the prokaryotic/mitochondrial release factor family. Post-translationally, methylated by PrmC. Methylation increases the termination efficiency of RF1.

Its subcellular location is the cytoplasm. In terms of biological role, peptide chain release factor 1 directs the termination of translation in response to the peptide chain termination codons UAG and UAA. In Streptococcus gordonii (strain Challis / ATCC 35105 / BCRC 15272 / CH1 / DL1 / V288), this protein is Peptide chain release factor 1 (prfA).